A 126-amino-acid chain; its full sequence is FCS-Like Zinc finger 17 (126 aa).

Residues 41-85 (CFLKTCHLCNKQLHQDKDVYMYRGDLGFCSRECRESQMLIDDRKE) form an FLZ-type zinc finger.

The protein belongs to the FLZ family. Interacts with KIN10 and KIN11 via its FLZ-type zinc finger domain. Forms heterodimer with FLZ2 in vitro.

It localises to the nucleus. It is found in the cytoplasm. May act as an adapter to facilitate the interaction of SnRK1 complex with effector proteins, conferring tissue- and stimulus-type specific differences in the SnRK1 regulation pathway. The protein is FCS-Like Zinc finger 17 of Arabidopsis thaliana (Mouse-ear cress).